A 732-amino-acid chain; its full sequence is Elongation factor 2 (732 aa).

In terms of domain architecture, tr-type G spans 19–260; sequence ERIRNMGIAA…MVVRHLPNPL (242 aa). GTP contacts are provided by residues 28 to 35, 94 to 98, and 148 to 151; these read AHIDHGKT, DTPGH, and NKVD. Position 597 is a diphthamide (histidine 597).

The protein belongs to the TRAFAC class translation factor GTPase superfamily. Classic translation factor GTPase family. EF-G/EF-2 subfamily.

The protein localises to the cytoplasm. Catalyzes the GTP-dependent ribosomal translocation step during translation elongation. During this step, the ribosome changes from the pre-translocational (PRE) to the post-translocational (POST) state as the newly formed A-site-bound peptidyl-tRNA and P-site-bound deacylated tRNA move to the P and E sites, respectively. Catalyzes the coordinated movement of the two tRNA molecules, the mRNA and conformational changes in the ribosome. The chain is Elongation factor 2 from Thermococcus onnurineus (strain NA1).